Consider the following 498-residue polypeptide: 3-octaprenyl-4-hydroxybenzoate carboxy-lyase (498 aa).

A Mn(2+)-binding site is contributed by Asn-177. Residues 180 to 182 (IYR), 194 to 196 (RWL), and 199 to 200 (RG) each bind prenylated FMN. A Mn(2+)-binding site is contributed by Glu-243. The active-site Proton donor is Asp-292.

The protein belongs to the UbiD family. Homohexamer. It depends on prenylated FMN as a cofactor. Requires Mn(2+) as cofactor.

Its subcellular location is the cell membrane. It catalyses the reaction a 4-hydroxy-3-(all-trans-polyprenyl)benzoate + H(+) = a 2-(all-trans-polyprenyl)phenol + CO2. Its pathway is cofactor biosynthesis; ubiquinone biosynthesis. In terms of biological role, catalyzes the decarboxylation of 3-octaprenyl-4-hydroxy benzoate to 2-octaprenylphenol, an intermediate step in ubiquinone biosynthesis. This is 3-octaprenyl-4-hydroxybenzoate carboxy-lyase from Methylococcus capsulatus (strain ATCC 33009 / NCIMB 11132 / Bath).